We begin with the raw amino-acid sequence, 92 residues long: Small ribosomal subunit protein uS19 (92 aa).

Belongs to the universal ribosomal protein uS19 family.

Functionally, protein S19 forms a complex with S13 that binds strongly to the 16S ribosomal RNA. In Prochlorococcus marinus (strain MIT 9301), this protein is Small ribosomal subunit protein uS19.